An 819-amino-acid chain; its full sequence is Kinesin-like protein KIN-13A (819 aa).

Residues 150–178 (EPFEPSPFIPKEMDEDDDDMLPGSQPGPS) form a disordered region. Positions 199-535 (KIKVVVRKRP…LRYADRVKSL (337 aa)) constitute a Kinesin motor domain. Residue 289–296 (GQTGSGKT) coordinates ATP. Positions 534 to 729 (SLSKGSNTRK…QSEKESSCDD (196 aa)) are disordered. Over residues 550–562 (TIPSSKDSSSAPS) the composition is skewed to low complexity. 2 stretches are compositionally biased toward basic and acidic residues: residues 577-589 (QEKR…RKAA) and 614-631 (RGKE…ERVD). Positions 632–652 (LNSSRISYNSKPQSVQSSANL) are enriched in polar residues. A compositionally biased stretch (basic and acidic residues) spans 669–686 (YRDDKPERQSNYAKKDSG). A compositionally biased stretch (low complexity) spans 697 to 719 (QQAKQLQQQQRPTSASASQNSSR). Residues 736 to 767 (LEEEEALIAAHRKEIENTMEIVREEMNLLAEV) adopt a coiled-coil conformation.

Belongs to the TRAFAC class myosin-kinesin ATPase superfamily. Kinesin family. KIN-13 subfamily. As to expression, ubiquitous.

It localises to the microsome. The sequence is that of Kinesin-like protein KIN-13A from Oryza sativa subsp. japonica (Rice).